The sequence spans 557 residues: Dihydroxy-acid dehydratase (557 aa).

C49 is a binding site for [2Fe-2S] cluster. Mg(2+) is bound at residue D81. A [2Fe-2S] cluster-binding site is contributed by C122. Positions 123 and 124 each coordinate Mg(2+). An N6-carboxylysine modification is found at K124. Position 194 (C194) interacts with [2Fe-2S] cluster. Residue E446 participates in Mg(2+) binding. S472 functions as the Proton acceptor in the catalytic mechanism.

The protein belongs to the IlvD/Edd family. In terms of assembly, homodimer. Requires [2Fe-2S] cluster as cofactor. Mg(2+) is required as a cofactor.

It catalyses the reaction (2R)-2,3-dihydroxy-3-methylbutanoate = 3-methyl-2-oxobutanoate + H2O. The enzyme catalyses (2R,3R)-2,3-dihydroxy-3-methylpentanoate = (S)-3-methyl-2-oxopentanoate + H2O. It functions in the pathway amino-acid biosynthesis; L-isoleucine biosynthesis; L-isoleucine from 2-oxobutanoate: step 3/4. It participates in amino-acid biosynthesis; L-valine biosynthesis; L-valine from pyruvate: step 3/4. In terms of biological role, functions in the biosynthesis of branched-chain amino acids. Catalyzes the dehydration of (2R,3R)-2,3-dihydroxy-3-methylpentanoate (2,3-dihydroxy-3-methylvalerate) into 2-oxo-3-methylpentanoate (2-oxo-3-methylvalerate) and of (2R)-2,3-dihydroxy-3-methylbutanoate (2,3-dihydroxyisovalerate) into 2-oxo-3-methylbutanoate (2-oxoisovalerate), the penultimate precursor to L-isoleucine and L-valine, respectively. The sequence is that of Dihydroxy-acid dehydratase from Prochlorococcus marinus (strain MIT 9215).